The primary structure comprises 305 residues: Tyrosine recombinase XerC (305 aa).

A Core-binding (CB) domain is found at 4–95 (TSIQALINKW…AVKNFYRFLE (92 aa)). The Tyr recombinase domain occupies 116 to 298 (LLPKALSEDD…SIKHLEAVYT (183 aa)). Active-site residues include arginine 159, lysine 182, histidine 250, arginine 253, and histidine 276. Tyrosine 285 (O-(3'-phospho-DNA)-tyrosine intermediate) is an active-site residue.

This sequence belongs to the 'phage' integrase family. XerC subfamily. In terms of assembly, forms a cyclic heterotetrameric complex composed of two molecules of XerC and two molecules of XerD.

The protein resides in the cytoplasm. Its function is as follows. Site-specific tyrosine recombinase, which acts by catalyzing the cutting and rejoining of the recombining DNA molecules. The XerC-XerD complex is essential to convert dimers of the bacterial chromosome into monomers to permit their segregation at cell division. It also contributes to the segregational stability of plasmids. This chain is Tyrosine recombinase XerC, found in Rickettsia africae (strain ESF-5).